Consider the following 449-residue polypeptide: Telomere resolvase ResT (449 aa).

No cofactors were found to be necessary. serves as cofactor.

It is found in the cytoplasm. The protein localises to the nucleoid. Catalyzes the conservative, sequence-specific DNA breakage and reunion reaction that generates two hairpin telomeres from a replicated telomere substrate. Breaks two phosphodiester bonds in a single DNA duplex and joins each end with the opposite DNA strand to form covalently closed hairpin telomeres. In vitro relaxed-circular, open-circular and linearized plasmids, but not supercoiled DNA, are all substrates. Cleavage is position-dependent relative to conserved sequence elements. This Borreliella burgdorferi (strain ATCC 35210 / DSM 4680 / CIP 102532 / B31) (Borrelia burgdorferi) protein is Telomere resolvase ResT.